Reading from the N-terminus, the 301-residue chain is Amylovoran biosynthesis glycosyltransferase AmsB (301 aa).

It belongs to the glycosyltransferase 2 family.

The protein operates within glycan metabolism; exopolysaccharide biosynthesis. Its function is as follows. Involved in the biosynthesis of amylovoran, which functions as a virulence factor. May function as a glycosyl transferase which transfers galactose from UDP-galactose to a lipid-linked amylovoran-subunit precursor. The chain is Amylovoran biosynthesis glycosyltransferase AmsB (amsB) from Erwinia amylovora (Fire blight bacteria).